Consider the following 82-residue polypeptide: Cysteine proteinase inhibitor A (82 aa).

The protein belongs to the cystatin family.

Strong inhibitor of papain and ficin but poor inhibitor of cathepsin H, B and L. The polypeptide is Cysteine proteinase inhibitor A (Helianthus annuus (Common sunflower)).